A 109-amino-acid polypeptide reads, in one-letter code: Movement protein TGB2 (109 aa).

The Cytoplasmic segment spans residues 1–9 (MPLQPPPDH). Residues 10 to 30 (TWAVRIIALGLAVTALIFTST) form a helical membrane-spanning segment. The Lumenal portion of the chain corresponds to 31–71 (RDTSRHVGDPSHSLPFGGHYRDGSKVIHYNSPRSSKPSNHT). Residues 72–92 (PYLLFAPIGIILLIHALHRLG) traverse the membrane as a helical segment. The Cytoplasmic portion of the chain corresponds to 93–109 (NSAHICRCTHCMPHSQT).

Belongs to the Tymovirales TGBp2 protein family.

The protein resides in the host endoplasmic reticulum membrane. In terms of biological role, plays a role in viral cell-to-cell propagation, by facilitating genome transport to neighboring plant cells through plasmosdesmata,. The polypeptide is Movement protein TGB2 (Citrus (ICRSV)).